The primary structure comprises 285 residues: 4-diphosphocytidyl-2-C-methyl-D-erythritol kinase (285 aa).

Lys-12 is a catalytic residue. 95–105 (PMGGGVGGGSS) contacts ATP. Asp-137 is an active-site residue.

This sequence belongs to the GHMP kinase family. IspE subfamily.

The enzyme catalyses 4-CDP-2-C-methyl-D-erythritol + ATP = 4-CDP-2-C-methyl-D-erythritol 2-phosphate + ADP + H(+). Its pathway is isoprenoid biosynthesis; isopentenyl diphosphate biosynthesis via DXP pathway; isopentenyl diphosphate from 1-deoxy-D-xylulose 5-phosphate: step 3/6. Catalyzes the phosphorylation of the position 2 hydroxy group of 4-diphosphocytidyl-2C-methyl-D-erythritol. This chain is 4-diphosphocytidyl-2-C-methyl-D-erythritol kinase, found in Actinobacillus pleuropneumoniae serotype 7 (strain AP76).